The primary structure comprises 506 residues: Glycerol kinase (506 aa).

An ADP-binding site is contributed by T11. Residues T11, S12, and S13 each coordinate ATP. Residue T11 coordinates sn-glycerol 3-phosphate. R15 lines the ADP pocket. Residues R81, E82, Y133, and D242 each coordinate sn-glycerol 3-phosphate. Glycerol is bound by residues R81, E82, Y133, D242, and Q243. ADP contacts are provided by T264 and G316. ATP contacts are provided by T264, G316, Q320, and G421. 2 residues coordinate ADP: G421 and N425.

The protein belongs to the FGGY kinase family.

The catalysed reaction is glycerol + ATP = sn-glycerol 3-phosphate + ADP + H(+). It functions in the pathway polyol metabolism; glycerol degradation via glycerol kinase pathway; sn-glycerol 3-phosphate from glycerol: step 1/1. Its activity is regulated as follows. Inhibited by fructose 1,6-bisphosphate (FBP). Functionally, key enzyme in the regulation of glycerol uptake and metabolism. Catalyzes the phosphorylation of glycerol to yield sn-glycerol 3-phosphate. In Paracidovorax citrulli (strain AAC00-1) (Acidovorax citrulli), this protein is Glycerol kinase.